A 435-amino-acid chain; its full sequence is UPF0053 protein Rv2366c (435 aa).

A CNNM transmembrane domain is found at 1 to 185 (MTGYYQLLGS…QQRGVVAADE (185 aa)). The next 2 membrane-spanning stretches (helical) occupy residues 7–27 (LLGS…DAAI) and 89–109 (VWGL…VVGV). 2 consecutive CBS domains span residues 204-267 (MVPR…GRET) and 272-329 (VMRP…IADE).

Belongs to the UPF0053 family.

The protein resides in the cell membrane. The sequence is that of UPF0053 protein Rv2366c from Mycobacterium tuberculosis (strain ATCC 25618 / H37Rv).